A 161-amino-acid chain; its full sequence is MKSHRTLYKSAVFLYLIFKGKRMLHLTLEDELFLGTPKQVGTHSTVFEHFAVMFEDDGETGYFYALDMRQNAQPIVDMLHVYNVDSTSNHHEARKLEICWDESGYVALLLINGYPHAVFDFARLVGYNSNKYPQPDLMSMWTREEITNKQAEQWLGVKTIR.

This is an uncharacterized protein from Haemophilus influenzae (strain ATCC 51907 / DSM 11121 / KW20 / Rd).